The chain runs to 195 residues: FMN-dependent NADH:quinone oxidoreductase (195 aa).

FMN-binding positions include S10, 16–18 (SVS), and 88–91 (MYNF).

Belongs to the azoreductase type 1 family. As to quaternary structure, homodimer. Requires FMN as cofactor.

The enzyme catalyses 2 a quinone + NADH + H(+) = 2 a 1,4-benzosemiquinone + NAD(+). It catalyses the reaction N,N-dimethyl-1,4-phenylenediamine + anthranilate + 2 NAD(+) = 2-(4-dimethylaminophenyl)diazenylbenzoate + 2 NADH + 2 H(+). Quinone reductase that provides resistance to thiol-specific stress caused by electrophilic quinones. In terms of biological role, also exhibits azoreductase activity. Catalyzes the reductive cleavage of the azo bond in aromatic azo compounds to the corresponding amines. This Francisella philomiragia subsp. philomiragia (strain ATCC 25017 / CCUG 19701 / FSC 153 / O#319-036) protein is FMN-dependent NADH:quinone oxidoreductase.